The chain runs to 245 residues: tRNA pseudouridine synthase A (245 aa).

Residue Asp52 is the Nucleophile of the active site. A substrate-binding site is contributed by Tyr111.

Belongs to the tRNA pseudouridine synthase TruA family. As to quaternary structure, homodimer.

The enzyme catalyses uridine(38/39/40) in tRNA = pseudouridine(38/39/40) in tRNA. Formation of pseudouridine at positions 38, 39 and 40 in the anticodon stem and loop of transfer RNAs. This chain is tRNA pseudouridine synthase A, found in Rickettsia bellii (strain RML369-C).